Reading from the N-terminus, the 416-residue chain is CinA-like protein (416 aa).

Belongs to the CinA family.

This chain is CinA-like protein, found in Rippkaea orientalis (strain PCC 8801 / RF-1) (Cyanothece sp. (strain PCC 8801)).